The chain runs to 83 residues: Short neurotoxin B (83 aa).

The N-terminal stretch at Met1–Thr21 is a signal peptide. Intrachain disulfides connect Cys24/Cys45, Cys38/Cys62, Cys64/Cys75, and Cys76/Cys81.

The protein belongs to the three-finger toxin family. Short-chain subfamily. Type I alpha-neurotoxin sub-subfamily. As to expression, expressed by the venom gland.

It localises to the secreted. Its function is as follows. Binds to muscle nicotinic acetylcholine receptor (nAChR) and inhibit acetylcholine from binding to the receptor, thereby impairing neuromuscular transmission. The sequence is that of Short neurotoxin B from Laticauda laticaudata (Blue-ringed sea krait).